The sequence spans 145 residues: Large ribosomal subunit protein uL11 (145 aa).

It belongs to the universal ribosomal protein uL11 family. As to quaternary structure, part of the ribosomal stalk of the 50S ribosomal subunit. Interacts with L10 and the large rRNA to form the base of the stalk. L10 forms an elongated spine to which L12 dimers bind in a sequential fashion forming a multimeric L10(L12)X complex. Post-translationally, one or more lysine residues are methylated.

Its function is as follows. Forms part of the ribosomal stalk which helps the ribosome interact with GTP-bound translation factors. This chain is Large ribosomal subunit protein uL11, found in Coxiella burnetii (strain Dugway 5J108-111).